A 466-amino-acid chain; its full sequence is Adenosylhomocysteinase (466 aa).

3 residues coordinate substrate: T57, D132, and E192. Residue 193 to 195 coordinates NAD(+); it reads TTT. Positions 222 and 226 each coordinate substrate. NAD(+) contacts are provided by residues N227, 256 to 261, E279, N314, 335 to 337, and N380; these read GYGDVG and IGH.

The protein belongs to the adenosylhomocysteinase family. NAD(+) serves as cofactor.

It localises to the cytoplasm. The enzyme catalyses S-adenosyl-L-homocysteine + H2O = L-homocysteine + adenosine. The protein operates within amino-acid biosynthesis; L-homocysteine biosynthesis; L-homocysteine from S-adenosyl-L-homocysteine: step 1/1. Its function is as follows. May play a key role in the regulation of the intracellular concentration of adenosylhomocysteine. This chain is Adenosylhomocysteinase, found in Mesorhizobium japonicum (strain LMG 29417 / CECT 9101 / MAFF 303099) (Mesorhizobium loti (strain MAFF 303099)).